The primary structure comprises 56 residues: Cecropin-A2 (56 aa).

An Arginine amide modification is found at R55.

This sequence belongs to the cecropin family.

It is found in the secreted. Its function is as follows. Cecropins have lytic and antibacterial activity against several Gram-positive and Gram-negative bacteria. The protein is Cecropin-A2 (CecA2) of Drosophila yakuba (Fruit fly).